The sequence spans 175 residues: Protein tyrosine phosphatase PRL-1 (175 aa).

Residues 15–172 enclose the Tyrosine-protein phosphatase domain; sequence KPSRVLFHFL…YKRRHQGAGC (158 aa). Cysteine 53 and cysteine 114 are disulfide-bonded. Aspartate 76 acts as the Proton donor in catalysis. Catalysis depends on cysteine 114, which acts as the Phosphocysteine intermediate. 116–120 contacts substrate; that stretch reads AGLGR. At cysteine 172 the chain carries Cysteine methyl ester. The S-farnesyl cysteine moiety is linked to residue cysteine 172. A propeptide spans 173–175 (removed in mature form); it reads VIM.

It belongs to the protein-tyrosine phosphatase family.

The protein localises to the cytoplasm. It localises to the mitochondrion matrix. Its subcellular location is the kinetoplast. It is found in the secreted. The protein resides in the extracellular exosome. The catalysed reaction is O-phospho-L-tyrosyl-[protein] + H2O = L-tyrosyl-[protein] + phosphate. Activated in a reduced environment which promotes the reduction of the disulfide bond between the regulatory Cys-53 and catalytic Cys-114 residues. Functionally, has protein tyrosine phosphatase activity and may act as a virulence factor to support intracellular survival in host macrophages. This Leishmania major protein is Protein tyrosine phosphatase PRL-1.